A 55-amino-acid polypeptide reads, in one-letter code: Large ribosomal subunit protein bL33B (55 aa).

It belongs to the bacterial ribosomal protein bL33 family.

The protein is Large ribosomal subunit protein bL33B of Salinispora tropica (strain ATCC BAA-916 / DSM 44818 / JCM 13857 / NBRC 105044 / CNB-440).